The following is a 257-amino-acid chain: Probable transcriptional regulatory protein SRU_2667 (257 aa).

Positions 1–15 are enriched in basic residues; that stretch reads MAGHTRKWAKVKRKK. The segment at 1-25 is disordered; it reads MAGHTRKWAKVKRKKQKDDRRKSKV.

Belongs to the TACO1 family.

The protein resides in the cytoplasm. The sequence is that of Probable transcriptional regulatory protein SRU_2667 from Salinibacter ruber (strain DSM 13855 / M31).